The primary structure comprises 277 residues: Shikimate dehydrogenase (NADP(+)) (277 aa).

Residues 15–17 and threonine 62 contribute to the shikimate site; that span reads SLS. Residue lysine 66 is the Proton acceptor of the active site. Residues asparagine 87 and aspartate 102 each coordinate shikimate. NADP(+) contacts are provided by residues 127–131, 151–156, and isoleucine 219; these read GAGGA and NRTVDK. Tyrosine 221 provides a ligand contact to shikimate. Glycine 242 serves as a coordination point for NADP(+).

This sequence belongs to the shikimate dehydrogenase family. As to quaternary structure, homodimer.

It catalyses the reaction shikimate + NADP(+) = 3-dehydroshikimate + NADPH + H(+). The protein operates within metabolic intermediate biosynthesis; chorismate biosynthesis; chorismate from D-erythrose 4-phosphate and phosphoenolpyruvate: step 4/7. Functionally, involved in the biosynthesis of the chorismate, which leads to the biosynthesis of aromatic amino acids. Catalyzes the reversible NADPH linked reduction of 3-dehydroshikimate (DHSA) to yield shikimate (SA). The polypeptide is Shikimate dehydrogenase (NADP(+)) (Bacillus cereus (strain AH820)).